A 533-amino-acid polypeptide reads, in one-letter code: Glucosidase 2 subunit beta (533 aa).

A signal peptide spans 1–13 (MLLLLLLLPMCWA). Phosphoserine is present on S23. LDL-receptor class A domains are found at residues 36-70 (FTCLDGSASIPFDQVNDDYCDCKDGSDEPGTAACP) and 71-112 (NGSF…IVCE). Intrachain disulfides connect C38–C57 and C55–C69. Residue D48 participates in substrate binding. 6 residues coordinate Ca(2+): Q49, D52, Y54, D56, D62, and E63. D52 contacts substrate. An N-linked (GlcNAc...) asparagine glycan is attached at N71. 3 disulfides stabilise this stretch: C76-C98, C96-C111, and C99-C115. Phosphoserine; by PKC is present on S88. Residues D93, V95, D97, D103, and E104 each coordinate Ca(2+). K165 carries the N6-succinyllysine modification. Phosphoserine is present on S167. EF-hand domains are found at residues 208–243 (RERELAASAFQELDDDMDGAVSVAELQTHPELDTDG) and 244–279 (DGALSEGEAQTLLGGDAQMDAAFFYDRVWAAIRDKY). Ca(2+)-binding residues include D221, D223, D225, and E232. Positions 284 to 363 (LPTEYPPSPP…SPTEEDRMPP (80 aa)) are disordered. Residues 312–336 (TEEEDEDEEDEETEEDEDEEDEDSQ) show a composition bias toward acidic residues. Phosphoserine; by PKC occurs at positions 388 and 395. The 102-residue stretch at 418 to 519 (SQCYELTTNE…ELMTPAACPE (102 aa)) folds into the MRH domain. C420 and C433 are disulfide-bonded. S439 carries the post-translational modification Phosphoserine; by PKC. 2 cysteine pairs are disulfide-bonded: C476/C505 and C490/C517. A glycan (N-linked (GlcNAc...) asparagine) is linked at N481. The Prevents secretion from ER motif lies at 530 to 533 (HDEL).

In terms of assembly, heterodimer of a catalytic alpha subunit (GANAB) and a beta subunit (PRKCSH). Binds glycosylated PTPRC. In terms of tissue distribution, ubiquitous. Highly expressed in liver, spleen, lung, duodenum, stomach, adrenal gland, pituitary, testis, corpus luteum, uterus and fetal ovary.

Its subcellular location is the endoplasmic reticulum. It functions in the pathway glycan metabolism; N-glycan metabolism. In terms of biological role, regulatory subunit of glucosidase II that cleaves sequentially the 2 innermost alpha-1,3-linked glucose residues from the Glc(2)Man(9)GlcNAc(2) oligosaccharide precursor of immature glycoproteins. Required for efficient PKD1/Polycystin-1 biogenesis and trafficking to the plasma membrane of the primary cilia. In Bos taurus (Bovine), this protein is Glucosidase 2 subunit beta (PRKCSH).